The chain runs to 117 residues: Large ribosomal subunit protein uL18 (117 aa).

This sequence belongs to the universal ribosomal protein uL18 family. Part of the 50S ribosomal subunit; part of the 5S rRNA/L5/L18/L25 subcomplex. Contacts the 5S and 23S rRNAs.

In terms of biological role, this is one of the proteins that bind and probably mediate the attachment of the 5S RNA into the large ribosomal subunit, where it forms part of the central protuberance. This chain is Large ribosomal subunit protein uL18, found in Azoarcus sp. (strain BH72).